Here is a 93-residue protein sequence, read N- to C-terminus: Small ribosomal subunit protein uS19 (93 aa).

It belongs to the universal ribosomal protein uS19 family.

Functionally, protein S19 forms a complex with S13 that binds strongly to the 16S ribosomal RNA. This chain is Small ribosomal subunit protein uS19, found in Ligilactobacillus salivarius (strain UCC118) (Lactobacillus salivarius).